We begin with the raw amino-acid sequence, 1312 residues long: Cyclic GMP-binding protein D (1312 aa).

The N-terminal Ras-GEF domain occupies 26 to 155 (GFSAIKSCSL…EFFKAKKMAR (130 aa)). Composition is skewed to low complexity over residues 206–236 (NTMN…SSPN) and 275–296 (NGTS…LFNQ). Disordered stretches follow at residues 206–244 (NTMN…RSSM) and 260–326 (NFNN…NNVN). Polar residues predominate over residues 297-310 (QPSLSMLNDDGSVQ). Low complexity predominate over residues 311–326 (NNNNNNNNNNNNNNVN). Residues 353–582 (LPEAIAKELT…FRLSKIREET (230 aa)) enclose the Ras-GEF domain. The segment at 586–658 (QSLKESNGIG…NCGNGSGISS (73 aa)) is disordered. The span at 591–612 (SNGIGNSNSTSGGSSSSLVNKD) shows a compositional bias: low complexity. Gly residues predominate over residues 613–625 (GSGGGGGSGGGGS). Residues 630–644 (GDGKGDGKDNRDGRG) show a composition bias toward basic and acidic residues. Residues 646–657 (GNSNCGNGSGIS) are compositionally biased toward low complexity. 698 to 857 (VSSTLSEREW…ATFYKFIGVI (160 aa)) contacts a nucleoside 3',5'-cyclic phosphate. A GRAM domain is found at 940 to 1006 (SSFRTKFGLS…DKILTVDKNI (67 aa)). The segment covering 1059 to 1087 (QQQQPSQQPSQQQSQSSQLQQSVSASSTT) has biased composition (low complexity). Disordered stretches follow at residues 1059 to 1108 (QQQQ…IKDL) and 1167 to 1210 (NNIN…NSSI). A nucleoside 3',5'-cyclic phosphate is bound by residues 1105–1218 (IKDL…SNTS) and 1182–1303 (NNNN…LACV).

In terms of biological role, promotes the exchange of Ras-bound GDP by GTP. Induces the formation of substrate-attached pseudopodia, that leads to increased adhesion and thereby negatively influencing cell speed and polarity. This Dictyostelium discoideum (Social amoeba) protein is Cyclic GMP-binding protein D (gbpD).